We begin with the raw amino-acid sequence, 224 residues long: Propanediol dehydratase medium subunit (224 aa).

Positions 1–18 (MEINEKLLRQIIEDVLRD) are targets protein to the BMC.

It belongs to the diol/glycerol dehydratase medium subunit family. In terms of assembly, the propanediol dehydratase enzyme is a heterotrimeric complex composed of a large (PduC), a medium (PduD) and a small (PduE) subunit. Adenosylcob(III)alamin is required as a cofactor.

Its subcellular location is the bacterial microcompartment. It catalyses the reaction propane-1,2-diol = propanal + H2O. It functions in the pathway polyol metabolism; 1,2-propanediol degradation. With respect to regulation, inhibited by glycerol. Its function is as follows. Part of the PduCDE complex that catalyzes the dehydration of 1,2-propanediol (1,2-PD) to propionaldehyde. Required for S.typhimurium growth on 1,2-PD as the sole carbon and energy source. This subunit is directly targeted to the bacterial microcompartment (BMC) dedicated to 1,2-PD degradation, and is also responsible for targeting the other 2 subunits (pduC and pduE). The 1,2-PD-specific bacterial microcompartment (BMC) concentrates low levels of 1,2-PD catabolic enzymes, concentrates volatile reaction intermediates thus enhancing pathway flux and keeps the level of toxic, mutagenic propionaldehyde low. This is Propanediol dehydratase medium subunit from Salmonella typhimurium (strain LT2 / SGSC1412 / ATCC 700720).